A 190-amino-acid chain; its full sequence is Lipocalin Can f 6.0101 (190 aa).

The signal sequence occupies residues 1–15; sequence MKLLLLCLGLILVHA. An igE-binding region spans residues 43-54; sequence SDIKEKIEENGS. Asn-52 and Asn-67 each carry an N-linked (GlcNAc...) asparagine glycan. The interval 76–83 is igE-binding; that stretch reads TKVNGKCT. Residues Cys-82 and Cys-175 are joined by a disulfide bond. Asn-90 is a glycosylation site (N-linked (GlcNAc...) asparagine). Positions 91-97 are igE-binding; that stretch reads KTEKDGE. Positions 100 to 109 are no IgE-binding; sequence VVHDGYNLFR. IgE-binding regions lie at residues 125 to 132 and 139 to 152; these read NVNQEQEF and GRKP…KEKF.

It belongs to the calycin superfamily. Lipocalin family. As to quaternary structure, monomer. As to expression, expressed in saliva (at protein level). Expressed in dander (at protein level). According to PubMed:22104604, expressed in submaxillary gland. In contrast, according to PubMed:22515174, not expressed in submaxillary gland. Expressed in bladder and skin, but not in tongue.

The protein resides in the secreted. This chain is Lipocalin Can f 6.0101, found in Canis lupus familiaris (Dog).